Reading from the N-terminus, the 403-residue chain is S-adenosylmethionine synthase (403 aa).

H16 is a binding site for ATP. D18 is a Mg(2+) binding site. E44 serves as a coordination point for K(+). Residues E57 and Q110 each contribute to the L-methionine site. Residues 110 to 120 are flexible loop; sequence QSAHIAQGVDA. Residues 175-177, D253, 259-260, A276, and K280 contribute to the ATP site; these read DSK and RK. D253 is an L-methionine binding site. Position 284 (K284) interacts with L-methionine.

This sequence belongs to the AdoMet synthase family. Homotetramer; dimer of dimers. Mg(2+) serves as cofactor. Requires K(+) as cofactor.

It is found in the cytoplasm. The catalysed reaction is L-methionine + ATP + H2O = S-adenosyl-L-methionine + phosphate + diphosphate. The protein operates within amino-acid biosynthesis; S-adenosyl-L-methionine biosynthesis; S-adenosyl-L-methionine from L-methionine: step 1/1. In terms of biological role, catalyzes the formation of S-adenosylmethionine (AdoMet) from methionine and ATP. The overall synthetic reaction is composed of two sequential steps, AdoMet formation and the subsequent tripolyphosphate hydrolysis which occurs prior to release of AdoMet from the enzyme. The chain is S-adenosylmethionine synthase from Erythrobacter litoralis (strain HTCC2594).